Here is a 189-residue protein sequence, read N- to C-terminus: Putative manganese efflux pump MntP (189 aa).

A run of 6 helical transmembrane segments spans residues 3-23, 41-61, 69-89, 105-125, 133-153, and 168-188; these read PISL…AALG, LIFG…GQVA, DHWI…YNGI, FWIL…VGVG, IVIA…IGVM, and IVGG…HLSA.

Belongs to the MntP (TC 9.B.29) family.

The protein resides in the cell inner membrane. Functionally, probably functions as a manganese efflux pump. The chain is Putative manganese efflux pump MntP from Pseudomonas savastanoi pv. phaseolicola (strain 1448A / Race 6) (Pseudomonas syringae pv. phaseolicola (strain 1448A / Race 6)).